The chain runs to 437 residues: Cobyrinate a,c-diamide synthase (437 aa).

The GATase cobBQ-type domain maps to 243 to 433; sequence IAAIAYDSAF…SHFHFSSARG (191 aa). Cys-324 (nucleophile) is an active-site residue.

Belongs to the CobB/CbiA family. Mg(2+) serves as cofactor.

The catalysed reaction is cob(II)yrinate + 2 L-glutamine + 2 ATP + 2 H2O = cob(II)yrinate a,c diamide + 2 L-glutamate + 2 ADP + 2 phosphate + 2 H(+). It functions in the pathway cofactor biosynthesis; adenosylcobalamin biosynthesis; cob(II)yrinate a,c-diamide from sirohydrochlorin (anaerobic route): step 10/10. Catalyzes the ATP-dependent amidation of the two carboxylate groups at positions a and c of cobyrinate, using either L-glutamine or ammonia as the nitrogen source. This chain is Cobyrinate a,c-diamide synthase, found in Sulfurisphaera tokodaii (strain DSM 16993 / JCM 10545 / NBRC 100140 / 7) (Sulfolobus tokodaii).